The sequence spans 1211 residues: Homeodomain-interacting protein kinase 1 (1211 aa).

Residue Lys-25 forms a Glycyl lysine isopeptide (Lys-Gly) (interchain with G-Cter in SUMO); alternate linkage. Residue Lys-25 forms a Glycyl lysine isopeptide (Lys-Gly) (interchain with G-Cter in SUMO2); alternate linkage. Residues Lys-120 and Lys-124 each participate in a glycyl lysine isopeptide (Lys-Gly) (interchain with G-Cter in SUMO2) cross-link. The Protein kinase domain maps to 190-518; sequence YEVLEFLGRG…PLKTLNHQFV (329 aa). Residues 196–204 and Lys-219 each bind ATP; that span reads LGRGTFGQV. The active-site Proton acceptor is Asp-315. Positions 835 to 856 are disordered; that stretch reads QQQSSSLPSRKNKQSAPVSSTS. The short motif at 844–847 is the Nuclear localization signal 1 (NLS1) element; sequence RKNK. Ser-872 carries the post-translational modification Phosphoserine. Residues 885–1094 form an interaction with TP53 region; sequence PVQDQHQPII…FQHGSPLHST (210 aa). The required for localization to nuclear speckles stretch occupies residues 891–998; that stretch reads QPIIIPDTPS…PLKTQLGDCT (108 aa). An SUMO interaction motifs (SIM); required for nuclear localization and kinase activity region spans residues 902–926; sequence PVSVITIRSDTDEEEDNKFKPSSSS. A Glycyl lysine isopeptide (Lys-Gly) (interchain with G-Cter in SUMO2) cross-link involves residue Lys-991. 3 disordered regions span residues 1002-1023, 1047-1070, and 1085-1105; these read QASG…GQSS, LSQN…APRR, and FQHG…APAH. 2 stretches are compositionally biased toward low complexity: residues 1048-1064 and 1096-1105; these read SQNQ…ERSS and HPHLAPAPAH. Residue Ser-1201 is modified to Phosphoserine. Residue Lys-1204 forms a Glycyl lysine isopeptide (Lys-Gly) (interchain with G-Cter in SUMO) linkage.

It belongs to the protein kinase superfamily. CMGC Ser/Thr protein kinase family. HIPK subfamily. In terms of assembly, interacts with Nkx1-2, Nkx2-5, MYB, PARK7, DAXX and p53/TP53. Part of a cytoplasmic complex made of HIPK1, DAB2IP and MAP3K5 in response to TNF. This complex formation promotes MAP3K5-JNK activation and subsequent apoptosis. Phosphorylated and activated by JNK1. Autophosphorylated. Post-translationally, sumoylated. When conjugated it is directed to nuclear speckles. SENP1-mediated desumoylation is mediated by TNF in response to stress stimuli, triggering transient translocation from nucleus to cytoplasm.

The protein localises to the nucleus. It is found in the cytoplasm. It localises to the nucleus speckle. It catalyses the reaction L-seryl-[protein] + ATP = O-phospho-L-seryl-[protein] + ADP + H(+). It carries out the reaction L-threonyl-[protein] + ATP = O-phospho-L-threonyl-[protein] + ADP + H(+). Its function is as follows. Serine/threonine-protein kinase involved in transcription regulation and TNF-mediated cellular apoptosis. Plays a role as a corepressor for homeodomain transcription factors. Phosphorylates DAXX and MYB. Phosphorylates DAXX in response to stress, and mediates its translocation from the nucleus to the cytoplasm. Inactivates MYB transcription factor activity by phosphorylation. Prevents MAP3K5-JNK activation in the absence of TNF. TNF triggers its translocation to the cytoplasm in response to stress stimuli, thus activating nuclear MAP3K5-JNK by derepression and promoting apoptosis. May be involved in anti-oxidative stress responses. Involved in the regulation of eye size, lens formation and retinal lamination during late embryogenesis. Promotes angiogenesis and to be involved in erythroid differentiation. May be involved in malignant squamous cell tumor formation. Phosphorylates PAGE4 at 'Thr-51' which is critical for the ability of PAGE4 to potentiate the transcriptional activator activity of JUN. The chain is Homeodomain-interacting protein kinase 1 from Rattus norvegicus (Rat).